A 265-amino-acid chain; its full sequence is Neuronal membrane glycoprotein M6-b (265 aa).

The chain crosses the membrane as a helical span at residues Gly-31–Phe-51. Residue Asn-73 is glycosylated (N-linked (GlcNAc...) asparagine). The next 2 membrane-spanning stretches (helical) occupy residues Val-90 to Phe-110 and Phe-136 to Val-156. Residue Asn-177 is glycosylated (N-linked (GlcNAc...) asparagine). A helical membrane pass occupies residues Leu-224–Met-244. Residue Ser-257 is modified to Phosphoserine.

The protein belongs to the myelin proteolipid protein family. In terms of assembly, interacts with SERT. As to expression, highly expressed in the ventral medullary surface, moderately in the cerebral cortex and cerebellum, poorly in lung and kidney, and not at all in heart, skeletal muscle, liver, stomach or stomach.

The protein localises to the membrane. Its subcellular location is the cell membrane. In terms of biological role, may be involved in neural development. Involved in regulation of osteoblast function and bone formation. Involved in matrix vesicle release by osteoblasts; this function seems to involve maintenance of the actin cytoskeleton. May be involved in cellular trafficking of SERT and thereby in regulation of serotonin uptake. The protein is Neuronal membrane glycoprotein M6-b (Gpm6b) of Rattus norvegicus (Rat).